A 290-amino-acid chain; its full sequence is tRNA (adenine(58)-N(1))-methyltransferase catalytic subunit TRMT61A (290 aa).

The residue at position 2 (Ser-2) is an N-acetylserine. Substrate regions lie at residues 20 to 22, 35 to 42, 64 to 65, 85 to 89, and 110 to 117; these read LGH, QTQTRHGV, GW, QILYS, and SGTGSGSV. S-adenosyl-L-methionine is bound by residues Leu-87, 114–116, Glu-135, Arg-140, 163–164, and Asp-181; these read SGS and DV. 2 substrate regions span residues 180–183 and 205–212; these read LDIP and SFSPCIEQ. Substrate is bound at residue Thr-279.

The protein belongs to the class I-like SAM-binding methyltransferase superfamily. TRM61 family. Heterotetramer; composed of two copies of TRMT6 and two copies of TRMT61A.

The protein resides in the nucleus. It catalyses the reaction adenosine(58) in tRNA + S-adenosyl-L-methionine = N(1)-methyladenosine(58) in tRNA + S-adenosyl-L-homocysteine + H(+). The catalysed reaction is an adenosine in mRNA + S-adenosyl-L-methionine = an N(1)-methyladenosine in mRNA + S-adenosyl-L-homocysteine + H(+). In terms of biological role, catalytic subunit of tRNA (adenine-N(1)-)-methyltransferase, which catalyzes the formation of N(1)-methyladenine at position 58 (m1A58) in initiator methionyl-tRNA. Catalytic subunit of mRNA N(1)-methyltransferase complex, which mediates methylation of adenosine residues at the N(1) position of a small subset of mRNAs: N(1) methylation takes place in tRNA T-loop-like structures of mRNAs and is only present at low stoichiometries. This chain is tRNA (adenine(58)-N(1))-methyltransferase catalytic subunit TRMT61A (Trmt61a), found in Rattus norvegicus (Rat).